A 264-amino-acid polypeptide reads, in one-letter code: tRNA pseudouridine synthase A (264 aa).

The Nucleophile role is filled by D51. Y109 is a binding site for substrate.

Belongs to the tRNA pseudouridine synthase TruA family. As to quaternary structure, homodimer.

It catalyses the reaction uridine(38/39/40) in tRNA = pseudouridine(38/39/40) in tRNA. Its function is as follows. Formation of pseudouridine at positions 38, 39 and 40 in the anticodon stem and loop of transfer RNAs. In Aromatoleum aromaticum (strain DSM 19018 / LMG 30748 / EbN1) (Azoarcus sp. (strain EbN1)), this protein is tRNA pseudouridine synthase A.